A 146-amino-acid polypeptide reads, in one-letter code: Protein translocase subunit SecE (146 aa).

The segment at methionine 1 to aspartate 81 is disordered. The span at aspartate 10–threonine 20 shows a compositional bias: gly residues. The span at arginine 45–alanine 54 shows a compositional bias: polar residues. The span at lysine 69–aspartate 81 shows a compositional bias: basic and acidic residues. Residues valine 118–alanine 138 form a helical membrane-spanning segment.

It belongs to the SecE/SEC61-gamma family. As to quaternary structure, component of the Sec protein translocase complex. Heterotrimer consisting of SecY, SecE and SecG subunits. The heterotrimers can form oligomers, although 1 heterotrimer is thought to be able to translocate proteins. Interacts with the ribosome. Interacts with SecDF, and other proteins may be involved. Interacts with SecA.

The protein localises to the cell membrane. In terms of biological role, essential subunit of the Sec protein translocation channel SecYEG. Clamps together the 2 halves of SecY. May contact the channel plug during translocation. In Mycobacterium leprae (strain TN), this protein is Protein translocase subunit SecE.